Here is a 630-residue protein sequence, read N- to C-terminus: NUAK family SNF1-like kinase 2 (630 aa).

M1 bears the N-acetylmethionine mark. Positions 57-307 constitute a Protein kinase domain; that stretch reads YEFLETLGKG…LEDVASHWWV (251 aa). Residues 63-71 and K85 each bind ATP; that span reads LGKGTYGKV. D179 serves as the catalytic Proton acceptor. T212 bears the Phosphothreonine mark. Disordered stretches follow at residues 361-504 and 521-566; these read HVPG…RLHR and GTAP…LDLP. A compositionally biased stretch (low complexity) spans 464 to 476; the sequence is SGYYSSPEPSESG. S529, S550, S553, and S579 each carry phosphoserine.

It belongs to the protein kinase superfamily. CAMK Ser/Thr protein kinase family. SNF1 subfamily. The cofactor is Mg(2+). In terms of processing, phosphorylated at Thr-212 by STK11/LKB1 in complex with STE20-related adapter-alpha (STRADA) pseudo kinase and CAB39. Autophosphorylation is also possible at Thr-212. As to expression, expressed in liver, skin, testis, uterus, ovary, adrenal gland and brain (at protein level). Expressed in kidney, heart, skin, spleen, lung, uterus, liver and the exocrine and endocrine compartments of the human pancreas. A kinase-inactive isoform also appears to be expressed in the skin, spleen, lung, uterus, liver and testis.

It carries out the reaction L-seryl-[protein] + ATP = O-phospho-L-seryl-[protein] + ADP + H(+). It catalyses the reaction L-threonyl-[protein] + ATP = O-phospho-L-threonyl-[protein] + ADP + H(+). Its activity is regulated as follows. Activated by phosphorylation on Thr-212 by STK11 in complex with STE20-related adapter-alpha (STRAD alpha) pseudo kinase and CAB39. Stress-activated kinase involved in tolerance to glucose starvation. Induces cell-cell detachment by increasing F-actin conversion to G-actin. Expression is induced by CD95 or TNF-alpha, via NF-kappa-B. Protects cells from CD95-mediated apoptosis and is required for the increased motility and invasiveness of CD95-activated tumor cells. Phosphorylates LATS1 and LATS2. Plays a key role in neural tube closure during embryonic development through LATS2 phosphorylation and regulation of the nuclear localization of YAP1 a critical downstream regulatory target in the Hippo signaling pathway. This chain is NUAK family SNF1-like kinase 2, found in Rattus norvegicus (Rat).